The sequence spans 44 residues: Photosystem I reaction center subunit IX (44 aa).

A helical membrane pass occupies residues 7-27; sequence YLSTAPVLATLWFGSLAGLLI.

It belongs to the PsaJ family.

It is found in the plastid. The protein localises to the chloroplast thylakoid membrane. Its function is as follows. May help in the organization of the PsaE and PsaF subunits. The protein is Photosystem I reaction center subunit IX of Cycas taitungensis (Prince sago).